The sequence spans 117 residues: Large ribosomal subunit protein bL20c (117 aa).

This sequence belongs to the bacterial ribosomal protein bL20 family.

Its subcellular location is the plastid. The protein resides in the chloroplast. In terms of biological role, binds directly to 23S ribosomal RNA and is necessary for the in vitro assembly process of the 50S ribosomal subunit. It is not involved in the protein synthesizing functions of that subunit. This chain is Large ribosomal subunit protein bL20c, found in Draba nemorosa (Woodland whitlowgrass).